We begin with the raw amino-acid sequence, 417 residues long: Serpin A3-7 (417 aa).

Residues 1-25 form the signal peptide; the sequence is MRTERTSFLLALGLLVSGFCSRVHC. N-linked (GlcNAc...) asparagine glycosylation is found at N103, N183, N221, and N267.

It belongs to the serpin family. As to quaternary structure, homodimer.

Its subcellular location is the cytoplasmic vesicle. It localises to the secretory vesicle. The protein localises to the chromaffin granule. It is found in the secreted. Serine protease inhibitor. In Bos taurus (Bovine), this protein is Serpin A3-7.